Reading from the N-terminus, the 498-residue chain is ATP synthase subunit beta, chloroplastic (498 aa).

172-179 lines the ATP pocket; the sequence is GGAGVGKT.

Belongs to the ATPase alpha/beta chains family. F-type ATPases have 2 components, CF(1) - the catalytic core - and CF(0) - the membrane proton channel. CF(1) has five subunits: alpha(3), beta(3), gamma(1), delta(1), epsilon(1). CF(0) has four main subunits: a(1), b(1), b'(1) and c(9-12).

It localises to the plastid. The protein localises to the chloroplast thylakoid membrane. The enzyme catalyses ATP + H2O + 4 H(+)(in) = ADP + phosphate + 5 H(+)(out). Functionally, produces ATP from ADP in the presence of a proton gradient across the membrane. The catalytic sites are hosted primarily by the beta subunits. The sequence is that of ATP synthase subunit beta, chloroplastic from Solanum bulbocastanum (Wild potato).